The primary structure comprises 847 residues: Putative membrane protein SCO5905 (847 aa).

The next 12 membrane-spanning stretches (helical) occupy residues 18-38 (AVVV…APAL), 187-207 (GGDK…LLAI), 215-235 (LVPL…GAIL), 248-268 (ASIM…IITA), 302-322 (IVLA…GFGP), 326-346 (LGVA…VLLL), 381-401 (VKVA…LLGY), 539-559 (DTTL…VLLL), 562-582 (LLAP…TLGA), 600-620 (VTAY…IFIM), 643-663 (TGGV…VLMT), and 672-692 (FGFA…PLLV). The interval 708-729 (RPGTPQTPSTPTSEPPSADAPA) is disordered. A run of 3 helical transmembrane segments spans residues 744–764 (FTWI…GMYL), 778–798 (FGTL…LVAI), and 808–828 (TIFA…EIWA).

Belongs to the resistance-nodulation-cell division (RND) (TC 2.A.6) family. MmpL subfamily.

It localises to the cell membrane. This chain is Putative membrane protein SCO5905, found in Streptomyces coelicolor (strain ATCC BAA-471 / A3(2) / M145).